The sequence spans 347 residues: D-fructose 1,6-bisphosphatase class 2/sedoheptulose 1,7-bisphosphatase (347 aa).

Residues Asp33, Glu57, Asp97, and Glu100 each coordinate Mn(2+). Substrate contacts are provided by residues 100–102 (EGT), Tyr131, 176–178 (RKR), and 198–200 (DGD). Residue Glu225 participates in Mn(2+) binding.

The protein belongs to the FBPase class 2 family. As to quaternary structure, homotetramer. It depends on Mn(2+) as a cofactor.

The catalysed reaction is beta-D-fructose 1,6-bisphosphate + H2O = beta-D-fructose 6-phosphate + phosphate. It catalyses the reaction D-sedoheptulose 1,7-bisphosphate + H2O = D-sedoheptulose 7-phosphate + phosphate. It functions in the pathway carbohydrate biosynthesis; Calvin cycle. Its function is as follows. Catalyzes the hydrolysis of fructose 1,6-bisphosphate (Fru 1,6-P2) and sedoheptulose 1,7-bisphosphate (Sed 1,7-P2) to fructose 6-phosphate and sedoheptulose 7-phosphate, respectively. This Synechococcus sp. (strain JA-3-3Ab) (Cyanobacteria bacterium Yellowstone A-Prime) protein is D-fructose 1,6-bisphosphatase class 2/sedoheptulose 1,7-bisphosphatase.